Reading from the N-terminus, the 101-residue chain is Urease subunit beta (101 aa).

Belongs to the urease beta subunit family. In terms of assembly, heterotrimer of UreA (gamma), UreB (beta) and UreC (alpha) subunits. Three heterotrimers associate to form the active enzyme.

Its subcellular location is the cytoplasm. The enzyme catalyses urea + 2 H2O + H(+) = hydrogencarbonate + 2 NH4(+). Its pathway is nitrogen metabolism; urea degradation; CO(2) and NH(3) from urea (urease route): step 1/1. This Cupriavidus necator (strain ATCC 17699 / DSM 428 / KCTC 22496 / NCIMB 10442 / H16 / Stanier 337) (Ralstonia eutropha) protein is Urease subunit beta.